A 723-amino-acid polypeptide reads, in one-letter code: Hypoxia-inducible factor prolyl hydroxylase (723 aa).

Zn(2+) contacts are provided by C39, C42, C54, C57, C63, H67, H75, and C79. The MYND-type; atypical zinc finger occupies C39–C79. A compositionally biased stretch (low complexity) spans P249 to S270. 2 disordered regions span residues P249–T275 and I294–Y323. Residues G468–D566 form the Fe2OG dioxygenase domain. Fe cation contacts are provided by H487, D489, and H548. R557 lines the 2-oxoglutarate pocket. Residues R678–I723 form a disordered region. A compositionally biased stretch (basic and acidic residues) spans D687–S699.

As to quaternary structure, interacts (via catalytic domain) with lin-10 (via N-terminus); the interaction regulates lin-10 subcellular localization; the interaction is direct. Interacts (via catalytic domain) with swan-1 (via WD 1-3 repeats); the interaction may regulate vhl-1-independent hif-1 transcriptional activity; the interaction is direct. Interacts (via C-terminus) with cysl-1; the interaction is enhanced by hydrogen disulfide and activates hif-1-mediated transcription; the interaction is direct. The cofactor is Fe(2+). Requires L-ascorbate as cofactor. In larvae and adults, expressed in pharyngeal and body wall muscles.

It is found in the cytoplasm. It localises to the nucleus. Its subcellular location is the cell projection. The protein resides in the dendrite. The protein localises to the axon. It carries out the reaction L-prolyl-[hypoxia-inducible factor alpha subunit] + 2-oxoglutarate + O2 = trans-4-hydroxy-L-prolyl-[hypoxia-inducible factor alpha subunit] + succinate + CO2. Inhibited by Co(2+) and dimethyloxalylglycine. Inhibited by the iron chelator 2, 2'-dipyridyl. Cellular oxygen sensor which regulates the stability and the activity of hypoxia-inducible transcription factor, hif-1. In normoxic conditions, hydroxylates hif-1 targeting it for vhl-1-mediated proteasomal degradation. In addition, regulates hif-1 transcriptional activity in a vhl-1-independent manner and independently of its hydroxylase activity. By regulating hif-1 activity, controls several cellular responses. Mediates susceptibility to B.thuringiensis and V.cholerae pore-forming toxins and enteropathogenic E.coli. Mediates susceptibility to P.aeruginosa PAO1-mediated killing by regulating resistance to cyanide produced by P.aeruginosa. Mediates resistance to S.aureus-mediated killing. In addition, plays a role in heat acclimation, neuronal development, behavioral responses to reoxygenation and hydrogen sulfide, iron homeostasis and aging. In neurons, involved in mitochondrion fusion during reoxygenation. Involved in egg laying. Its function is as follows. Regulates the trafficking of the glutamate receptor glr-1, probably independently of hif-1, by regulating lin-10 subcellular localization in response to oxygen levels. May hydroxylate lin-10. The chain is Hypoxia-inducible factor prolyl hydroxylase from Caenorhabditis elegans.